A 122-amino-acid polypeptide reads, in one-letter code: Large ribosomal subunit protein uL14 (122 aa).

This sequence belongs to the universal ribosomal protein uL14 family. As to quaternary structure, part of the 50S ribosomal subunit. Forms a cluster with proteins L3 and L19. In the 70S ribosome, L14 and L19 interact and together make contacts with the 16S rRNA in bridges B5 and B8.

Functionally, binds to 23S rRNA. Forms part of two intersubunit bridges in the 70S ribosome. In Borreliella burgdorferi (strain ZS7) (Borrelia burgdorferi), this protein is Large ribosomal subunit protein uL14.